Here is a 394-residue protein sequence, read N- to C-terminus: Alanine racemase 2 (394 aa).

The Proton acceptor; specific for D-alanine role is filled by K39. K39 bears the N6-(pyridoxal phosphate)lysine mark. R139 provides a ligand contact to substrate. Y272 acts as the Proton acceptor; specific for L-alanine in catalysis. Substrate is bound at residue M320.

This sequence belongs to the alanine racemase family. Pyridoxal 5'-phosphate is required as a cofactor.

The enzyme catalyses L-alanine = D-alanine. It functions in the pathway amino-acid biosynthesis; D-alanine biosynthesis; D-alanine from L-alanine: step 1/1. Its function is as follows. Catalyzes the interconversion of L-alanine and D-alanine. May also act on other amino acids. This chain is Alanine racemase 2 (alr2), found in Bacillus subtilis (strain 168).